Reading from the N-terminus, the 354-residue chain is Uroporphyrinogen decarboxylase (354 aa).

Substrate contacts are provided by residues 27–31, aspartate 77, tyrosine 154, threonine 209, and histidine 327; that span reads RQAGR.

It belongs to the uroporphyrinogen decarboxylase family. As to quaternary structure, homodimer.

Its subcellular location is the cytoplasm. It catalyses the reaction uroporphyrinogen III + 4 H(+) = coproporphyrinogen III + 4 CO2. It functions in the pathway porphyrin-containing compound metabolism; protoporphyrin-IX biosynthesis; coproporphyrinogen-III from 5-aminolevulinate: step 4/4. Functionally, catalyzes the decarboxylation of four acetate groups of uroporphyrinogen-III to yield coproporphyrinogen-III. This Shigella dysenteriae serotype 1 (strain Sd197) protein is Uroporphyrinogen decarboxylase.